The primary structure comprises 731 residues: Gelsolin (731 aa).

The actin-severing stretch occupies residues 2–125 (VVEHPEFLKA…YKKGGVASGF (124 aa)). The Gelsolin-like 1 repeat unit spans residues 25-107 (FDLVPVPPNL…VQGFESATFL (83 aa)). Position 35 is a phosphotyrosine (Tyr-35). Ca(2+) is bound by residues Gly-41, Asp-42, Glu-73, Asp-85, Gly-90, and Ala-92. The actin-actin interfilament contact point stretch occupies residues 72–75 (DESG). Residue 111–118 (KSGLKYKK) coordinates a 1,2-diacyl-sn-glycero-3-phospho-(1D-myo-inositol-4,5-bisphosphate). Val-121 provides a ligand contact to Ca(2+). 137–145 (RLFQVKGRR) lines the a 1,2-diacyl-sn-glycero-3-phospho-(1D-myo-inositol-4,5-bisphosphate) pocket. A Gelsolin-like 2 repeat occupies 147–219 (VRATEVPVSW…SEEGAEPEAM (73 aa)). Ca(2+) contacts are provided by Gly-162 and Asp-163. Cys-164 and Cys-177 are disulfide-bonded. A Ca(2+)-binding site is contributed by Glu-185. Over residues 197–211 (RDNERSGRARVHVSE) the composition is skewed to basic and acidic residues. Positions 197-216 (RDNERSGRARVHVSEEGAEP) are disordered. The Ca(2+) site is built by Asp-235, Glu-278, Asp-279, and Glu-303. The Gelsolin-like 3 repeat unit spans residues 266-338 (DENPFAQGAL…LPEGGETPLF (73 aa)). Tyr-358 and Tyr-414 each carry phosphotyrosine. Residues 383–731 (AAQHGMDDDG…LDRALAELAA (349 aa)) form an actin-binding, Ca-sensitive region. Residues 404–485 (SDKVPVDPAT…VQGKEPAHLM (82 aa)) form a Gelsolin-like 4 repeat. Ca(2+) is bound by residues Gly-420, Asp-421, Glu-451, Asp-463, Gly-468, Pro-470, and Thr-500. Residues 527–591 (AVEVMPKAGA…AEGSEPDSFW (65 aa)) form a Gelsolin-like 5 repeat. Residue Lys-533 is modified to N6-acetyllysine. Positions 540 and 541 each coordinate Ca(2+). Tyr-552 carries the phosphotyrosine modification. Ca(2+) is bound at residue Glu-563. At Tyr-600 the chain carries Phosphotyrosine. The stretch at 630–705 (IEEVPGELMQ…VKQGFEPPSF (76 aa)) is one Gelsolin-like 6 repeat. Ca(2+)-binding residues include Asp-645, Asp-646, and Glu-668. The residue at position 691 (Thr-691) is a Phosphothreonine.

This sequence belongs to the villin/gelsolin family. Binds to actin and to fibronectin. Identified in a complex composed of ACTA1, COBL, GSN and TMSB4X. Interacts with the inactive form of EIF2AK2/PKR. Interacts with FLII.

The protein localises to the cytoplasm. It localises to the cytoskeleton. Functionally, calcium-regulated, actin-modulating protein that binds to the plus (or barbed) ends of actin monomers or filaments, preventing monomer exchange (end-blocking or capping). It can promote the assembly of monomers into filaments (nucleation) as well as sever filaments already formed. Plays a role in ciliogenesis. The sequence is that of Gelsolin (GSN) from Bos taurus (Bovine).